Reading from the N-terminus, the 359-residue chain is Heat-inducible transcription repressor HrcA (359 aa).

This sequence belongs to the HrcA family.

Negative regulator of class I heat shock genes (grpE-dnaK-dnaJ and groELS operons). Prevents heat-shock induction of these operons. The chain is Heat-inducible transcription repressor HrcA from Sinorhizobium medicae (strain WSM419) (Ensifer medicae).